Consider the following 689-residue polypeptide: uncharacterized protein (689 aa).

Its subcellular location is the mitochondrion. This is an uncharacterized protein from Schizosaccharomyces pombe (strain 972 / ATCC 24843) (Fission yeast).